Reading from the N-terminus, the 109-residue chain is Anti-sigma-B factor antagonist (109 aa).

The STAS domain occupies 3-109; that stretch reads INVDVKQNEN…ISAKSEGGVQ (107 aa). Phosphoserine occurs at positions 52 and 56. Threonine 57 carries the phosphothreonine modification.

The protein belongs to the anti-sigma-factor antagonist family. In terms of assembly, monomer. In stressed cells, forms a complex with RsbW. The predominant form of this complex has a stoichiometry of 2:2 (one dimer of RsbW is bound by two monomers of RsbV). Binds to RsbW in the presence of low levels of ATP or under conditions of energy or environmental stress (through dephosphorylation by RsbP or RsbU). Post-translationally, phosphorylated by RsbW on a serine residue. Dephosphorylated by RsbP or RsbU.

In terms of biological role, positive regulator of sigma-B activity. Non-phosphorylated RsbV binds to RsbW, preventing its association with sigma-B. When phosphorylated, releases RsbW, which is then free to complex with and inactivate sigma-B. The chain is Anti-sigma-B factor antagonist (rsbV) from Bacillus subtilis (strain 168).